Consider the following 1208-residue polypeptide: E3 ubiquitin-protein ligase DZIP3 (1208 aa).

Over residues 10-29 the composition is skewed to basic and acidic residues; the sequence is VRHPAVEDQRKEETENKLEK. 2 disordered regions span residues 10–38 and 637–698; these read VRHP…NKQE and GTSI…PHSV. 4 coiled-coil regions span residues 14-43, 647-676, 792-853, and 904-939; these read AVED…DIPT, ESLK…SKED, IASL…SKLN, and QLKA…KVKQ. The span at 637 to 647 shows a compositional bias: polar residues; sequence GTSIPSESSTE. The segment covering 648-657 has biased composition (basic and acidic residues); the sequence is SLKDLQEVKS. A compositionally biased stretch (basic residues) spans 658 to 669; that stretch reads KQRKKKKTKNKK. Positions 670–693 are enriched in basic and acidic residues; that stretch reads NKDSKEDQVPYVVEKEEQLRKEQA. Residues 1088–1145 form a disordered region; sequence KSQSQGKSVSNVNCVSPSHSPSQPDAAQPPKPAWRPLTSQGPATWEGASNPDEEEEEE. Polar residues predominate over residues 1089–1112; it reads SQSQGKSVSNVNCVSPSHSPSQPD. The RING-type; atypical zinc finger occupies 1148 to 1188; sequence CVICHENLSPENLSVLPCAHKFHAQCIRPWLMQQGTCPTCR.

As to quaternary structure, interacts with DAZ proteins. In terms of tissue distribution, widely expressed at low level. Highly expressed in skeletal muscle, kidney and heart. Expressed at low level in placenta, lung, brain, liver and pancreas.

Its subcellular location is the cytoplasm. It catalyses the reaction S-ubiquitinyl-[E2 ubiquitin-conjugating enzyme]-L-cysteine + [acceptor protein]-L-lysine = [E2 ubiquitin-conjugating enzyme]-L-cysteine + N(6)-ubiquitinyl-[acceptor protein]-L-lysine.. The protein operates within protein modification; protein ubiquitination. In terms of biological role, E3 Ubiquitin ligase proteins mediate ubiquitination and subsequent proteasomal degradation of target proteins. E3 ubiquitin ligases accept ubiquitin from an E2 ubiquitin-conjugating enzyme in the form of a thioester and then directly transfers the ubiquitin to targeted substrates. Able to specifically bind RNA. In Homo sapiens (Human), this protein is E3 ubiquitin-protein ligase DZIP3 (DZIP3).